Reading from the N-terminus, the 167-residue chain is Effector CFEM8 (167 aa).

An N-terminal signal peptide occupies residues 1-17 (MQFSIVVMAALASLASA). The CFEM domain maps to 18–112 (QSMDGIPTCA…TPAAAAPYPT (95 aa)). Disulfide bonds link Cys-26/Cys-68, Cys-30/Cys-63, Cys-40/Cys-47, and Cys-49/Cys-85. Asp-44 serves as a coordination point for heme. N-linked (GlcNAc...) asparagine glycans are attached at residues Asn-117 and Asn-135. Gly-143 is lipidated: GPI-anchor amidated glycine. Positions 144 to 167 (SAPQNVAGGLAGIFGLVVAAAFAL) are cleaved as a propeptide — removed in mature form.

It belongs to the RBT5 family.

It is found in the cell membrane. Its subcellular location is the secreted. It localises to the host nucleus. The protein localises to the host cell membrane. Its function is as follows. Appears to function during host infection, and may play a role in suppressing the host immune response. The protein is Effector CFEM8 of Marssonina brunnea f. sp. multigermtubi (strain MB_m1) (Marssonina leaf spot fungus).